The sequence spans 266 residues: HLA class II histocompatibility antigen, DRB1 beta chain (266 aa).

A signal peptide spans 1 to 29 (MVCLKLPGGSCMTALTVTLMVLSSPLALS). The interval 30 to 124 (GDTRPRFLWQ…VESFTVQRRV (95 aa)) is beta-1. Residues 30–227 (GDTRPRFLWQ…RARSESAQSK (198 aa)) lie on the Extracellular side of the membrane. A disulfide bond links C44 and C108. Residue N48 is glycosylated (N-linked (GlcNAc...) asparagine). Positions 86, 90, 110, 111, and 122 each coordinate a peptide antigen. The segment at 125 to 227 (QPKVTVYPSK…RARSESAQSK (103 aa)) is beta-2. The Ig-like C1-type domain maps to 126 to 214 (PKVTVYPSKT…EHPSVTSPLT (89 aa)). C146 and C202 form a disulfide bridge. A helical membrane pass occupies residues 228 to 248 (MLSGVGGFVLGLLFLGAGLFI). Over 249-266 (YFRNQKGHSGLQPTGFLS) the chain is Cytoplasmic. K254 is covalently cross-linked (Glycyl lysine isopeptide (Lys-Gly) (interchain with G-Cter in ubiquitin)).

In terms of assembly, heterotrimer that consists of an alpha chain HLA-DRA, a beta chain HLA-DRB1 and a peptide (peptide-MHCII). Newly synthesized alpha and beta chains forms a heterodimer (MHCII) that associates with the CD74/invariant chain (Ii) in the endoplasmic reticulum (ER). Ii is a trimer composed of three subunits and each subunit interacts with one MHCII dimer, blocking the peptide-binding cleft. As a result, MHCII molecules cannot bind peptides present in the ER. The complex of MHCII and CD74/Ii is transported in vesicles from ER to Golgi to lysosomes, where it encounters antigenic peptides generated via proteolysis of endocytosed antigens. MHCII dimers are dissociated from CD74/Ii by the combined action of proteolysis and HLA-DM. Lysosomal enzymes such as cathepsin, degrade CD74/Ii leaving a 24 amino acid remnant called class II-associated Ii or CLIP. Interacts (via the peptide binding cleft) with CLIP; this interaction inhibits antigen peptide binding before entry in the endosomal compartment. The displacement of CLIP and replacement by a high affinity peptide in lysosomes is performed by HLA-DM heterodimer. HLA-DM catalyzes CLIP dissociation from MHCII, stabilizes empty MHCII and mediates the selection of high affinity peptides. Interacts with HLA-DM heterodimer; this interaction is direct. Interacts with TCR (via CDR3). Interacts (via beta-2 domain) with CD4 coreceptor (via Ig-like V-type domain); this interaction is of exceptionally low affinity yet necessary for optimal recognition of antigenic peptides. As to quaternary structure, (Microbial infection) Interacts with Staphylococcus aureus enterotoxin A/entA, enterotoxin B/entB, enterotoxin C1/entC1, enterotoxin D/entD and enterotoxin H/entH. Enterotoxins bind outside the peptide-binding cleft of MHCII: enterotoxin H/entH interacts via the beta-1 domain of MHCII and in a zinc-dependent way, whereas enterotoxin B/entB interacts primarily via the alpha-1 domain. (Microbial infection) Interacts with Epstein-Barr virus gp42 protein. In terms of processing, ubiquitinated by MARCHF1 and MARCHF8 at Lys-254 leading to sorting into the endosome system and down-regulation of MHCII. Expressed in professional APCs: monocyte/macrophages, dendritic cells and B cells (at protein level). Expressed in thymic epithelial cells (at protein level).

Its subcellular location is the cell membrane. It is found in the endoplasmic reticulum membrane. It localises to the lysosome membrane. The protein resides in the late endosome membrane. The protein localises to the autolysosome membrane. In terms of biological role, a beta chain of antigen-presenting major histocompatibility complex class II (MHCII) molecule. In complex with the alpha chain HLA-DRA, displays antigenic peptides on professional antigen presenting cells (APCs) for recognition by alpha-beta T cell receptor (TCR) on HLA-DRB1-restricted CD4-positive T cells. This guides antigen-specific T-helper effector functions, both antibody-mediated immune response and macrophage activation, to ultimately eliminate the infectious agents and transformed cells. Typically presents extracellular peptide antigens of 10 to 30 amino acids that arise from proteolysis of endocytosed antigens in lysosomes. In the tumor microenvironment, presents antigenic peptides that are primarily generated in tumor-resident APCs likely via phagocytosis of apoptotic tumor cells or macropinocytosis of secreted tumor proteins. Presents peptides derived from intracellular proteins that are trapped in autolysosomes after macroautophagy, a mechanism especially relevant for T cell selection in the thymus and central immune tolerance. The selection of the immunodominant epitopes follows two processing modes: 'bind first, cut/trim later' for pathogen-derived antigenic peptides and 'cut first, bind later' for autoantigens/self-peptides. The anchor residue at position 1 of the peptide N-terminus, usually a large hydrophobic residue, is essential for high affinity interaction with MHCII molecules. Functionally, allele DRB1*01:01: Displays an immunodominant epitope derived from Bacillus anthracis pagA/protective antigen, PA (KLPLYISNPNYKVNVYAVT), to both naive and PA-specific memory CD4-positive T cells. Presents immunodominant HIV-1 gag peptide (FRDYVDRFYKTLRAEQASQE) on infected dendritic cells for recognition by TRAV24-TRBV2 TCR on CD4-positive T cells and controls viral load. May present to T-helper 1 cells several HRV-16 epitopes derived from capsid proteins VP1 (PRFSLPFLSIASAYYMFYDG) and VP2 (PHQFINLRSNNSATLIVPYV), contributing to viral clearance. Displays commonly recognized peptides derived from IAV external protein HA (PKYVKQNTLKLAT and SNGNFIAPEYAYKIVK) and from internal proteins M, NP and PB1, with M-derived epitope (GLIYNRMGAVTTEV) being the most immunogenic. Presents a self-peptide derived from COL4A3 (GWISLWKGFSF) to TCR (TRAV14 biased) on CD4-positive, FOXP3-positive regulatory T cells and mediates immune tolerance to self. May present peptides derived from oncofetal trophoblast glycoprotein TPBG 5T4, known to be recognized by both T-helper 1 and regulatory T cells. Displays with low affinity a self-peptide derived from MBP (VHFFKNIVTPRTP). Allele DRB1*03:01: May present to T-helper 1 cells an HRV-16 epitope derived from capsid protein VP2 (NEKQPSDDNWLNFDGTLLGN), contributing to viral clearance. Displays self-peptides derived from retinal SAG (NRERRGIALDGKIKHE) and thyroid TG (LSSVVVDPSIRHFDV). Presents viral epitopes derived from HHV-6B gH/U48 and U85 antigens to polyfunctional CD4-positive T cells with cytotoxic activity implicated in control of HHV-6B infection. Presents several immunogenic epitopes derived from C.tetani neurotoxin tetX, playing a role in immune recognition and long-term protection. Its function is as follows. Allele DRB1*04:01: Presents an immunodominant bacterial epitope derived from M.tuberculosis esxB/culture filtrate antigen CFP-10 (EISTNIRQAGVQYSR), eliciting CD4-positive T cell effector functions such as IFNG production and cytotoxic activity. May present to T-helper 1 cells an HRV-16 epitope derived from capsid protein VP2 (NEKQPSDDNWLNFDGTLLGN), contributing to viral clearance. Presents tumor epitopes derived from melanoma-associated TYR antigen (QNILLSNAPLGPQFP and DYSYLQDSDPDSFQD), triggering CD4-positive T cell effector functions such as GMCSF production. Displays preferentially citrullinated self-peptides derived from VIM (GVYATR/citSSAVR and SAVRAR/citSSVPGVR) and ACAN (VVLLVATEGR/ CitVRVNSAYQDK). Displays self-peptides derived from COL2A1. In terms of biological role, allele DRB1*04:02: Displays native or citrullinated self-peptides derived from VIM. Functionally, allele DRB1*04:04: May present to T-helper 1 cells several HRV-16 epitopes derived from capsid proteins VP1 (HIVMQYMYVPPGAPIPTTRN) and VP2 (RGDSTITSQDVANAVVGYGV), contributing to viral clearance. Displays preferentially citrullinated self-peptides derived from VIM (SAVRAR/citSSVPGVR). Allele DRB1*04:05: May present to T-helper 1 cells an immunogenic epitope derived from tumor-associated antigen WT1 (KRYFKLSHLQMHSRKH), likely providing for effective antitumor immunity in a wide range of solid and hematological malignancies. Its function is as follows. Allele DRB1*05:01: Presents an immunodominant HIV-1 gag peptide (FRDYVDRFYKTLRAEQASQE) on infected dendritic cells for recognition by TRAV24-TRBV2 TCR on CD4-positive T cells and controls viral load. In terms of biological role, allele DRB1*07:01: Upon EBV infection, presents latent antigen EBNA2 peptide (PRSPTVFYNIPPMPLPPSQL) to CD4-positive T cells, driving oligoclonal expansion and selection of a dominant virus-specific memory T cell subset with cytotoxic potential to directly eliminate virus-infected B cells. May present to T-helper 1 cells several HRV-16 epitopes derived from capsid proteins VP1 (PRFSLPFLSIASAYYMFYDG) and VP2 (VPYVNAVPMDSMVRHNNWSL), contributing to viral clearance. In the context of tumor immunesurveillance, may present to T-helper 1 cells an immunogenic epitope derived from tumor-associated antigen WT1 (MTEYKLVVVGAVGVGKSALTIQLI), likely providing for effective antitumor immunity in a wide range of solid and hematological malignancies. In metastatic epithelial tumors, presents to intratumoral CD4-positive T cells a KRAS neoantigen (MTEYKLVVVGAVGVGKSALTIQLI) carrying G12V hotspot driver mutation and may mediate tumor regression. Functionally, allele DRB1*11:01: Displays an immunodominant HIV-1 gag peptide (FRDYVDRFYKTLRAEQASQE) on infected dendritic cells for recognition by TRAV24-TRBV2 TCR on CD4-positive T cells and controls viral load. May present to T-helper 1 cells an HRV-16 epitope derived from capsid protein VP2 (SDRIIQITRGDSTITSQDVA), contributing to viral clearance. Presents several immunogenic epitopes derived from C.tetani neurotoxin tetX, playing a role in immune recognition and longterm protection. In the context of tumor immunesurveillance, may present tumor-derived neoantigens to CD4-positive T cells and trigger anti-tumor helper functions. Allele DRB1*13:01: Presents viral epitopes derived from HHV-6B antigens to polyfunctional CD4-positive T cells implicated in control of HHV-6B infection. Its function is as follows. Allele DRB1*15:01: May present to T-helper 1 cells an HRV-16 epitope derived from capsid protein VP2 (SNNSATLIVPYVNAVPMDSM), contributing to viral clearance. Displays a self-peptide derived from MBP (ENPVVHFFKNIVTPR). May present to T-helper 1 cells an immunogenic epitope derived from tumor-associated antigen WT1 (KRYFKLSHLQMHSRKH), likely providing for effective antitumor immunity in a wide range of solid and hematological malignancies. In terms of biological role, allele DRB1*15:02: Displays an immunodominant HIV-1 gag peptide (FRDYVDRFYKTLRAEQASQE) on infected dendritic cells for recognition by TRAV24-TRBV2 TCR on CD4-positive T cells and controls viral load. May present to T-helper 1 cells an immunogenic epitope derived from tumor-associated antigen WT1 (KRYFKLSHLQMHSRKH), likely providing for effective antitumor immunity in a wide range of solid and hematological malignancies. Functionally, (Microbial infection) Acts as a receptor for Epstein-Barr virus on lymphocytes. This is HLA class II histocompatibility antigen, DRB1 beta chain from Homo sapiens (Human).